A 351-amino-acid polypeptide reads, in one-letter code: UDP-3-O-acylglucosamine N-acyltransferase (351 aa).

His-239 acts as the Proton acceptor in catalysis.

The protein belongs to the transferase hexapeptide repeat family. LpxD subfamily. In terms of assembly, homotrimer.

The catalysed reaction is a UDP-3-O-[(3R)-3-hydroxyacyl]-alpha-D-glucosamine + a (3R)-hydroxyacyl-[ACP] = a UDP-2-N,3-O-bis[(3R)-3-hydroxyacyl]-alpha-D-glucosamine + holo-[ACP] + H(+). It participates in bacterial outer membrane biogenesis; LPS lipid A biosynthesis. Catalyzes the N-acylation of UDP-3-O-acylglucosamine using 3-hydroxyacyl-ACP as the acyl donor. Is involved in the biosynthesis of lipid A, a phosphorylated glycolipid that anchors the lipopolysaccharide to the outer membrane of the cell. The sequence is that of UDP-3-O-acylglucosamine N-acyltransferase from Vibrio cholerae serotype O1 (strain ATCC 39315 / El Tor Inaba N16961).